Consider the following 35-residue polypeptide: MARKQKTLLCRNCRETKIAVDRVCPTCGCRLVPPY.

This is an uncharacterized protein from Haloarcula hispanica (His1V).